The following is an 85-amino-acid chain: Beta-insect depressant toxin Lqh-dprIT3h (85 aa).

Positions 1–21 (MKLLLLLTISASMLIEGLVNA) are cleaved as a signal peptide. In terms of domain architecture, LCN-type CS-alpha/beta spans 22–82 (DGYIRGGDGC…EWDYETDTCG (61 aa)). 4 cysteine pairs are disulfide-bonded: C31/C81, C35/C56, C42/C63, and C46/C65. A Glycine amide modification is found at G82.

It belongs to the long (4 C-C) scorpion toxin superfamily. Sodium channel inhibitor family. Beta subfamily. Expressed by the venom gland.

Its subcellular location is the secreted. Depressant insect beta-toxins cause a transient contraction paralysis followed by a slow flaccid paralysis. They bind voltage-independently at site-4 of sodium channels (Nav) and block action potentials, primarily by depolarizing the axonal membrane and suppressing the sodium current. This depressant toxin is active only on insects. It is found in a relatively small amount in the venom. The chain is Beta-insect depressant toxin Lqh-dprIT3h from Leiurus hebraeus (Hebrew deathstalker scorpion).